The following is a 320-amino-acid chain: Cytochrome f (320 aa).

The N-terminal stretch at 1–35 (MQTRNTFSWIREEITRSISVSLMIYIITWASISSA) is a signal peptide. 4 residues coordinate heme: Tyr36, Cys56, Cys59, and His60. Residues 286–306 (VQGLLFFLGSVVLAQIFLVLK) traverse the membrane as a helical segment.

It belongs to the cytochrome f family. The 4 large subunits of the cytochrome b6-f complex are cytochrome b6, subunit IV (17 kDa polypeptide, petD), cytochrome f and the Rieske protein, while the 4 small subunits are PetG, PetL, PetM and PetN. The complex functions as a dimer. Heme serves as cofactor.

It localises to the plastid. Its subcellular location is the chloroplast thylakoid membrane. Component of the cytochrome b6-f complex, which mediates electron transfer between photosystem II (PSII) and photosystem I (PSI), cyclic electron flow around PSI, and state transitions. The protein is Cytochrome f of Crucihimalaya wallichii (Rock-cress).